The primary structure comprises 361 residues: 3-dehydroquinate synthase (361 aa).

Residues 72-77 (SGEKEK), 130-131 (TT), Lys-142, and Lys-151 each bind NAD(+). 3 residues coordinate Zn(2+): Glu-184, His-247, and His-264.

Belongs to the sugar phosphate cyclases superfamily. Dehydroquinate synthase family. It depends on Co(2+) as a cofactor. Zn(2+) is required as a cofactor. The cofactor is NAD(+).

The protein localises to the cytoplasm. It catalyses the reaction 7-phospho-2-dehydro-3-deoxy-D-arabino-heptonate = 3-dehydroquinate + phosphate. Its pathway is metabolic intermediate biosynthesis; chorismate biosynthesis; chorismate from D-erythrose 4-phosphate and phosphoenolpyruvate: step 2/7. Functionally, catalyzes the conversion of 3-deoxy-D-arabino-heptulosonate 7-phosphate (DAHP) to dehydroquinate (DHQ). The sequence is that of 3-dehydroquinate synthase from Bacillus cereus (strain ATCC 10987 / NRS 248).